Reading from the N-terminus, the 512-residue chain is Cytochrome P450 monooxygenase astD (512 aa).

Residues 19–39 (MGISILVMLSTFLALGTIFVY) traverse the membrane as a helical segment. Asn-191 and Asn-413 each carry an N-linked (GlcNAc...) asparagine glycan. Heme is bound at residue Cys-449.

Belongs to the cytochrome P450 family. Heme serves as cofactor.

It localises to the membrane. It functions in the pathway secondary metabolite biosynthesis; terpenoid biosynthesis. In terms of biological role, cytochrome P450 monooxygenase; part of the gene cluster that mediates the biosynthesis of astellolides, drimane-type sesquiterpene esters that show antimicrobial, anti-inflammatory, and anti-tumor activities. The first step in astellolide biosynthesis is performed by the sesquiterpene cyclase astC that catalyzes the formation of drimanyl pyrophosphate from farnesyl pyrophosphate. Drimanyl pyrophosphate is then dephosphorylated by the sesquiterpene phosphatase astI to produce drimanyl monophosphate which is further dephosphorylated to drim-8-ene-11-ol by atsK. Drim-8-ene-11-ol is converted to confertifolin, probably by the cytochrome P450 monooxygenase astD and/or the dehydrogenase astE. The cytochrome P450 monooxygenases astB, astF and astJ then hydroxylate confertifolin at C6, C14, or C15 to form trihydroxy confertifolin. The nonribosomal peptide synthetase astA catalyzes ester bond formation between trihydroxy contifolin and benzoic acid (BA) or 4-hydroxy benzoic acid (4HBA), leading to the formation of dideacetyl astellolides A and B, respectively. Finally, the O-acetyltransferase astG converts dideacetyl astellolides A and B into deacetyl astellolides A and B. This Aspergillus oryzae (strain ATCC 42149 / RIB 40) (Yellow koji mold) protein is Cytochrome P450 monooxygenase astD.